We begin with the raw amino-acid sequence, 150 residues long: Arginine repressor (150 aa).

The protein belongs to the ArgR family.

Its subcellular location is the cytoplasm. The protein operates within amino-acid biosynthesis; L-arginine biosynthesis [regulation]. Its function is as follows. Regulates arginine biosynthesis genes. The sequence is that of Arginine repressor from Carboxydothermus hydrogenoformans (strain ATCC BAA-161 / DSM 6008 / Z-2901).